The primary structure comprises 27 residues: MKIFLYLLRKKIAEVWIFQNPANFLSL.

The protein resides in the plastid. Its subcellular location is the chloroplast. This is an uncharacterized protein from Trieres chinensis (Marine centric diatom).